The chain runs to 415 residues: MRIPVDPSTSRRFTPPSPAFPCGGGGGKMGENSGALSAQAAVGPGGRARPEVRSMVDVLADHAGELVRTDSPNFLCSVLPSHWRCNKTLPVAFKVVALGDVPDGTVVTVMAGNDENYSAELRNASAVMKNQVARFNDLRFVGRSGRGKSFTLTITVFTNPTQVATYHRAIKVTVDGPREPRRHRQKLEDQTKPFPDRFGDLERLRMRVTPSTPSPRGSLSTTSHFSSQPQTPIQGTSELNPFSDPRQFDRSFPTLPTLTESRFPDPRMHYPGAMSAAFPYSATPSGTSISSLSVAGMPATSRFHHTYLPPPYPGAPQNQSGPFQANPSPYHLYYGTSSGSYQFSMVAGSSSGGDRSPTRMLASCTSSAASVAAGNLMNPSLGGQSDGVEADGSHSNSPTALSTPGRMDEAVWRPY.

Disordered stretches follow at residues 1–48 (MRIP…GGRA), 176–266 (GPRE…FPDP), and 375–415 (NLMN…WRPY). In terms of domain architecture, Runt spans 54 to 182 (SMVDVLADHA…TVDGPREPRR (129 aa)). Positions 186 to 205 (KLEDQTKPFPDRFGDLERLR) are enriched in basic and acidic residues. K192 is covalently cross-linked (Glycyl lysine isopeptide (Lys-Gly) (interchain with G-Cter in SUMO2)). Polar residues predominate over residues 209-240 (TPSTPSPRGSLSTTSHFSSQPQTPIQGTSELN). At S243 the chain carries Phosphoserine. Polar residues predominate over residues 393-402 (SHSNSPTALS). A compositionally biased stretch (basic and acidic residues) spans 406 to 415 (RMDEAVWRPY).

Heterodimer with CBFB. RUNX3 binds DNA as a monomer and through the Runt domain. DNA-binding is increased by heterodimerization. Interacts with TLE1 and SUV39H1. The tyrosine phosphorylated form (via runt domain) interacts with SRC (via protein kinase domain). Interacts with FYN and LCK. Interacts with FOXP3. Interacts with ZFHX3. Interacts with TBX21. Phosphorylated on tyrosine residues by SRC. Phosphorylated by LCK and FYN. As to expression, expressed in gastric cancer tissues (at protein level).

The protein localises to the nucleus. The protein resides in the cytoplasm. In terms of biological role, forms the heterodimeric complex core-binding factor (CBF) with CBFB. RUNX members modulate the transcription of their target genes through recognizing the core consensus binding sequence 5'-TGTGGT-3', or very rarely, 5'-TGCGGT-3', within their regulatory regions via their runt domain, while CBFB is a non-DNA-binding regulatory subunit that allosterically enhances the sequence-specific DNA-binding capacity of RUNX. The heterodimers bind to the core site of a number of enhancers and promoters, including murine leukemia virus, polyomavirus enhancer, T-cell receptor enhancers, LCK, IL3 and GM-CSF promoters. May be involved in the control of cellular proliferation and/or differentiation. In association with ZFHX3, up-regulates CDKN1A promoter activity following TGF-beta stimulation. CBF complexes repress ZBTB7B transcription factor during cytotoxic (CD8+) T cell development. They bind to RUNX-binding sequence within the ZBTB7B locus acting as transcriptional silencer and allowing for cytotoxic T cell differentiation. CBF complexes binding to the transcriptional silencer is essential for recruitment of nuclear protein complexes that catalyze epigenetic modifications to establish epigenetic ZBTB7B silencing. Necessary for the development and survival of sensory neurons expressing parvalbumin. The protein is Runt-related transcription factor 3 (RUNX3) of Homo sapiens (Human).